Here is a 179-residue protein sequence, read N- to C-terminus: Ribulose bisphosphate carboxylase small subunit, chloroplastic 2 (179 aa).

Residues 1–58 (MASSATMLSSVATAACVAPAQASMVAPFVGLKSASAFPVTQKTVTGLSTLPSNGGRVQ) constitute a chloroplast transit peptide.

This sequence belongs to the RuBisCO small chain family. Heterohexadecamer of 8 large and 8 small subunits.

The protein localises to the plastid. It localises to the chloroplast. RuBisCO catalyzes two reactions: the carboxylation of D-ribulose 1,5-bisphosphate, the primary event in carbon dioxide fixation, as well as the oxidative fragmentation of the pentose substrate. Both reactions occur simultaneously and in competition at the same active site. Although the small subunit is not catalytic it is essential for maximal activity. The protein is Ribulose bisphosphate carboxylase small subunit, chloroplastic 2 of Fritillaria agrestis (Stinkbells).